Here is a 558-residue protein sequence, read N- to C-terminus: UvrABC system protein C (558 aa).

The GIY-YIG domain maps to 12–92 (LLPGVYIFYG…IFNHKPKYNV (81 aa)). A UVR domain is found at 200–235 (SETLDLIEEKMKKHAKMMDFENAAKYRDLLVKFENV).

The protein belongs to the UvrC family. As to quaternary structure, interacts with UvrB in an incision complex.

The protein resides in the cytoplasm. Functionally, the UvrABC repair system catalyzes the recognition and processing of DNA lesions. UvrC both incises the 5' and 3' sides of the lesion. The N-terminal half is responsible for the 3' incision and the C-terminal half is responsible for the 5' incision. This Pseudothermotoga lettingae (strain ATCC BAA-301 / DSM 14385 / NBRC 107922 / TMO) (Thermotoga lettingae) protein is UvrABC system protein C.